Reading from the N-terminus, the 345-residue chain is Dihydroorotase (345 aa).

Zn(2+) contacts are provided by His13 and His15. Residues His15–Arg17 and Asn41 each bind substrate. 3 residues coordinate Zn(2+): Lys99, His136, and His174. Position 99 is an N6-carboxylysine (Lys99). His136 contributes to the substrate binding site. Leu219 provides a ligand contact to substrate. Asp247 is a binding site for Zn(2+). Residue Asp247 is part of the active site. Residues His251 and Ala263 each coordinate substrate.

The protein belongs to the metallo-dependent hydrolases superfamily. DHOase family. Class II DHOase subfamily. Homodimer. It depends on Zn(2+) as a cofactor.

The enzyme catalyses (S)-dihydroorotate + H2O = N-carbamoyl-L-aspartate + H(+). Its pathway is pyrimidine metabolism; UMP biosynthesis via de novo pathway; (S)-dihydroorotate from bicarbonate: step 3/3. Its function is as follows. Catalyzes the reversible cyclization of carbamoyl aspartate to dihydroorotate. The sequence is that of Dihydroorotase from Acaryochloris marina (strain MBIC 11017).